The following is a 183-amino-acid chain: Translation initiation factor IF-3 (183 aa).

Residues 1–13 (MKQPDRNQQQGAK) show a composition bias toward polar residues. Residues 1–21 (MKQPDRNQQQGAKSNRPAIND) form a disordered region.

It belongs to the IF-3 family. In terms of assembly, monomer.

It is found in the cytoplasm. In terms of biological role, IF-3 binds to the 30S ribosomal subunit and shifts the equilibrium between 70S ribosomes and their 50S and 30S subunits in favor of the free subunits, thus enhancing the availability of 30S subunits on which protein synthesis initiation begins. This chain is Translation initiation factor IF-3, found in Acinetobacter baumannii (strain AYE).